We begin with the raw amino-acid sequence, 424 residues long: Hemagglutinin-esterase (424 aa).

Residues 1–16 form the signal peptide; the sequence is MFLLPRFCLVCSIIST. The segment at 7 to 127 is esterase domain 1; it reads FCLVCSIIST…NNDIWMQNKG (121 aa). Over 17 to 392 the chain is Virion surface; the sequence is FGFQNPPTNV…PICVYDPLPI (376 aa). The active-site Nucleophile is S40. C44 and C65 form a disulfide bridge. N-linked (GlcNAc...) asparagine; by host glycans are attached at residues N54, N89, N153, N236, and N301. Intrachain disulfides connect C113–C162, C197–C276, and C205–C249. The interval 128 to 266 is receptor binding; that stretch reads LFYTQVYKKM…GNYLAISNEL (139 aa). Positions 267–379 are esterase domain 2; the sequence is LLTVPTKAIC…NCPTAASIIS (113 aa). C307 and C312 are oxidised to a cystine. N316 carries an N-linked (GlcNAc...) asparagine; by host glycan. Catalysis depends on charge relay system residues D326 and H329. Cysteines 347 and 371 form a disulfide. N358 carries N-linked (GlcNAc...) asparagine; by host glycosylation. The helical transmembrane segment at 393–413 threads the bilayer; sequence ILLGILLGVAVIVIVVLLLYF. The Intravirion segment spans residues 414–424; sequence MVDNGIRQHYA.

It belongs to the influenza type C/coronaviruses hemagglutinin-esterase family. Homodimer; disulfide-linked. Forms a complex with the M protein in the pre-Golgi. Associates then with S-M complex to form a ternary complex S-M-HE. Post-translationally, N-glycosylated in the host RER.

It is found in the virion membrane. Its subcellular location is the host cell membrane. The enzyme catalyses N-acetyl-9-O-acetylneuraminate + H2O = N-acetylneuraminate + acetate + H(+). It catalyses the reaction N-acetyl-4-O-acetylneuraminate + H2O = N-acetylneuraminate + acetate + H(+). In terms of biological role, structural protein that makes short spikes at the surface of the virus. Contains receptor binding and receptor-destroying activities. Mediates de-O-acetylation of N-acetyl-4-O-acetylneuraminic acid, which is probably the receptor determinant recognized by the virus on the surface of erythrocytes and susceptible cells. This receptor-destroying activity is important for virus release as it probably helps preventing self-aggregation and ensures the efficient spread of the progeny virus from cell to cell. May serve as a secondary viral attachment protein for initiating infection, the spike protein being the major one. May become a target for both the humoral and the cellular branches of the immune system. This Sus scrofa (Pig) protein is Hemagglutinin-esterase.